Consider the following 424-residue polypeptide: Enolase (424 aa).

Gln-162 contributes to the (2R)-2-phosphoglycerate binding site. Glu-204 serves as the catalytic Proton donor. Asp-241, Glu-284, and Asp-311 together coordinate Mg(2+). Residues Lys-336, Arg-365, Ser-366, and Lys-387 each coordinate (2R)-2-phosphoglycerate. Residue Lys-336 is the Proton acceptor of the active site.

This sequence belongs to the enolase family. It depends on Mg(2+) as a cofactor.

It is found in the cytoplasm. The protein resides in the secreted. Its subcellular location is the cell surface. The enzyme catalyses (2R)-2-phosphoglycerate = phosphoenolpyruvate + H2O. It participates in carbohydrate degradation; glycolysis; pyruvate from D-glyceraldehyde 3-phosphate: step 4/5. In terms of biological role, catalyzes the reversible conversion of 2-phosphoglycerate (2-PG) into phosphoenolpyruvate (PEP). It is essential for the degradation of carbohydrates via glycolysis. This is Enolase from Maricaulis maris (strain MCS10) (Caulobacter maris).